Here is a 64-residue protein sequence, read N- to C-terminus: Large ribosomal subunit protein bL35 (64 aa).

This sequence belongs to the bacterial ribosomal protein bL35 family.

This Shewanella loihica (strain ATCC BAA-1088 / PV-4) protein is Large ribosomal subunit protein bL35.